The primary structure comprises 440 residues: MSAAPTSGPLTCRRAGPLRGAIEVPGDKSISHRSLLFGALSTGETRVTGLLDAEDVHSTRRAVEALGATVRDEGAEVVVTPPATLREPGDVIDCGNSGTSLRLLTGVLSGVPGLSVLTGDASLRRRPVRRVIDPLRVMGADLSARDGDRLPPVVVRGGPLRGARHLLPVASAQVKSALLLAGLFADGETAVVEPEKSRDHTERMLRGMGVPVRVSGLEVSVSAARPAGGRVDVPGDISSAAFFLCGAAALPGSEVTVRNLGVNETRTGLLDVLRAMGADVRLADLREVAGEPRADVTVRADRLEGTEIRGATIPRLIDELPAVMVMATQARGRTVIRDAKELRVKESDRLAAMGETLARAGARIELFEDGCAIDGPTPLRGVEVRTRLDHRIAMAMAVAQLFCGGEPVVLDDVACVATSFPGFFRLLDQVSGPASGGGAP.

The 3-phosphoshikimate site is built by Lys28, Ser29, and Arg33. Lys28 contributes to the phosphoenolpyruvate binding site. Residues Gly98 and Arg126 each contribute to the phosphoenolpyruvate site. 3-phosphoshikimate-binding residues include Ser171, Gln173, Asp318, and Lys345. Gln173 provides a ligand contact to phosphoenolpyruvate. Catalysis depends on Asp318, which acts as the Proton acceptor. The phosphoenolpyruvate site is built by Arg349 and Arg391.

This sequence belongs to the EPSP synthase family. As to quaternary structure, monomer.

It localises to the cytoplasm. The catalysed reaction is 3-phosphoshikimate + phosphoenolpyruvate = 5-O-(1-carboxyvinyl)-3-phosphoshikimate + phosphate. The protein operates within metabolic intermediate biosynthesis; chorismate biosynthesis; chorismate from D-erythrose 4-phosphate and phosphoenolpyruvate: step 6/7. Functionally, catalyzes the transfer of the enolpyruvyl moiety of phosphoenolpyruvate (PEP) to the 5-hydroxyl of shikimate-3-phosphate (S3P) to produce enolpyruvyl shikimate-3-phosphate and inorganic phosphate. In Anaeromyxobacter sp. (strain K), this protein is 3-phosphoshikimate 1-carboxyvinyltransferase.